Consider the following 346-residue polypeptide: tRNA N6-adenosine threonylcarbamoyltransferase (346 aa).

His110 and His114 together coordinate Fe cation. Residues 132-136 (LLSGG), Asp165, Gly178, and Asn274 contribute to the substrate site. Asp298 contributes to the Fe cation binding site.

The protein belongs to the KAE1 / TsaD family. Fe(2+) is required as a cofactor.

It is found in the cytoplasm. The enzyme catalyses L-threonylcarbamoyladenylate + adenosine(37) in tRNA = N(6)-L-threonylcarbamoyladenosine(37) in tRNA + AMP + H(+). Its function is as follows. Required for the formation of a threonylcarbamoyl group on adenosine at position 37 (t(6)A37) in tRNAs that read codons beginning with adenine. Is involved in the transfer of the threonylcarbamoyl moiety of threonylcarbamoyl-AMP (TC-AMP) to the N6 group of A37, together with TsaE and TsaB. TsaD likely plays a direct catalytic role in this reaction. The sequence is that of tRNA N6-adenosine threonylcarbamoyltransferase from Borreliella afzelii (strain PKo) (Borrelia afzelii).